We begin with the raw amino-acid sequence, 552 residues long: Urocanate hydratase (552 aa).

NAD(+)-binding positions include 49–50, glutamine 127, 173–175, aspartate 193, 239–240, 260–264, 270–271, and tyrosine 319; these read GG, GMG, NA, QTSAH, and YI. Cysteine 407 is an active-site residue. NAD(+) is bound at residue glycine 489.

Belongs to the urocanase family. The cofactor is NAD(+).

The protein localises to the cytoplasm. It carries out the reaction 4-imidazolone-5-propanoate = trans-urocanate + H2O. Its pathway is amino-acid degradation; L-histidine degradation into L-glutamate; N-formimidoyl-L-glutamate from L-histidine: step 2/3. Catalyzes the conversion of urocanate to 4-imidazolone-5-propionate. This Bacillus cereus (strain ATCC 14579 / DSM 31 / CCUG 7414 / JCM 2152 / NBRC 15305 / NCIMB 9373 / NCTC 2599 / NRRL B-3711) protein is Urocanate hydratase.